The sequence spans 520 residues: Rho GTPase-activating protein gacV (520 aa).

The chain crosses the membrane as a helical span at residues 8–28 (NIKTYYIIGIITLIFIVSAVI). Positions 28-192 (IKNQLSSSNQ…EEQEEEQFSM (165 aa)) form a coiled coil. Disordered regions lie at residues 33–73 (SSSN…KLDN), 121–189 (EEKQ…EEEQ), 348–373 (NNNN…NNNE), and 489–520 (LQEQ…DQEE). Residues 52–62 (SKGRGNKKGKK) show a composition bias toward basic residues. A compositionally biased stretch (basic and acidic residues) spans 63-73 (PEKIQEKKLDN). Residues 140–189 (QEEEEEEEEQQEIEEDEEEEEGQEQEEEEEQQEIEEGEEEQQEEEQEEEQ) show a composition bias toward acidic residues. The region spanning 195-472 (VSIERLMDFQ…ILLKQKKEIA (278 aa)) is the Rho-GAP domain. Residues 348-372 (NNNNNNNNNNNNNNNNNNDNNNNNN) are compositionally biased toward low complexity. Residues 480–520 (YFKDEYSKKLQEQNDQEEDNQEEEKDNQEEDEDEEDKDQEE) are a coiled coil. Positions 493 to 520 (NDQEEDNQEEEKDNQEEDEDEEDKDQEE) are enriched in acidic residues.

Its subcellular location is the membrane. Rho GTPase-activating protein involved in the signal transduction pathway. This Dictyostelium discoideum (Social amoeba) protein is Rho GTPase-activating protein gacV (gacV).